The following is a 385-amino-acid chain: MVNLNKVQPRSGGDHYLALGIEGSANKLGVGILKHPMLSQHKQGSLSHDCQAEILSNIRDTYITPPGEGFLPRDTARHHRNWVVRLVRRALVEAGIEDPRLLDVICFTKGPGMGAPLHSVVVAARTMSMLWDVPLVAVNHCIGHIEMGREITKAENPVVLYVSGGNTQVIAYSENRYRIFGETLDIAIGNCLDRFARTLKIPNDPSPGYNIEQLAKQCKNKDRLVELPYTVKGMDLSMSGILAHIDSLAKDLFRRNTKNYKLFDRETGKQLVTVEDLCYSLQEHLFAMLVEITERAMAHVNSNQVLIVGGVGCNVRLQQMMASMCQSRADGQVHATDERFCIDNGVMIAQAGLLQYRMGDIVKDFSETVVTQRFRTDEVYVSWRD.

Residues histidine 140, histidine 144, and tyrosine 161 each contribute to the a divalent metal cation site. Substrate is bound by residues 161-165 (YVSGG), aspartate 193, glycine 208, glutamate 212, and asparagine 314. A divalent metal cation is bound at residue aspartate 343.

Belongs to the KAE1 / TsaD family. As to quaternary structure, component of the EKC/KEOPS complex composed of at least BUD32, CGI121, GON7, KAE1 and PCC1; the whole complex dimerizes. A divalent metal cation serves as cofactor.

Its subcellular location is the cytoplasm. The protein resides in the nucleus. The enzyme catalyses L-threonylcarbamoyladenylate + adenosine(37) in tRNA = N(6)-L-threonylcarbamoyladenosine(37) in tRNA + AMP + H(+). Functionally, component of the EKC/KEOPS complex that is required for the formation of a threonylcarbamoyl group on adenosine at position 37 (t(6)A37) in tRNAs that read codons beginning with adenine. The complex is probably involved in the transfer of the threonylcarbamoyl moiety of threonylcarbamoyl-AMP (TC-AMP) to the N6 group of A37. KAE1 likely plays a direct catalytic role in this reaction, but requires other protein(s) of the complex to fulfill this activity. The EKC/KEOPS complex also promotes both telomere uncapping and telomere elongation. The complex is required for efficient recruitment of transcriptional coactivators. The sequence is that of tRNA N6-adenosine threonylcarbamoyltransferase from Eremothecium gossypii (strain ATCC 10895 / CBS 109.51 / FGSC 9923 / NRRL Y-1056) (Yeast).